Here is a 682-residue protein sequence, read N- to C-terminus: Methionine--tRNA ligase (682 aa).

Residues 15–25 (PYANGAIHLGH) carry the 'HIGH' region motif. Zn(2+) is bound by residues C146, C149, C159, and C162. The short motif at 331 to 335 (KMSKS) is the 'KMSKS' region element. Position 334 (K334) interacts with ATP. A tRNA-binding domain is found at 580–682 (DFAKLDMRVA…SGVTAGMQVK (103 aa)).

This sequence belongs to the class-I aminoacyl-tRNA synthetase family. MetG type 1 subfamily. As to quaternary structure, homodimer. It depends on Zn(2+) as a cofactor.

The protein localises to the cytoplasm. The catalysed reaction is tRNA(Met) + L-methionine + ATP = L-methionyl-tRNA(Met) + AMP + diphosphate. In terms of biological role, is required not only for elongation of protein synthesis but also for the initiation of all mRNA translation through initiator tRNA(fMet) aminoacylation. The sequence is that of Methionine--tRNA ligase from Haemophilus influenzae (strain ATCC 51907 / DSM 11121 / KW20 / Rd).